Here is an 838-residue protein sequence, read N- to C-terminus: U1 SNP1-associating protein 1 (838 aa).

Topologically, residues 1-536 are cytoplasmic; the sequence is MSEYLAQTPC…VRPLRNSFPL (536 aa). The segment at 31 to 240 is required for ERAD-L function; sequence HPLSTVGRLL…DFAPAHNSFF (210 aa). One can recognise a Ubiquitin-like domain in the interval 259–318; sequence ERFVLEFISDATLSITQMNVKPDTTVKQVKDFICSVYTHSLNLRRNDIKLIYKGQLLHEN. The segment at 319 to 418 is important for HRD1 oligomer formation; it reads NFAGNSSKIS…VPTDELYRKC (100 aa). The tract at residues 345–535 is interaction with HRD1; sequence QEYTESGPGF…VVRPLRNSFP (191 aa). Phosphoserine is present on residues serine 374, serine 376, and serine 379. Residues 437–490 form a required for ERAD-L function and HRD1 oligomer formation region; it reads SSYLSVIKGDYGEIKIPISSNDYRINGDNILLSPSAIEQLESALNFKIERPRDS. Residues 537 to 559 form a helical membrane-spanning segment; sequence LLVLIRTFYLIGYNSLVPFFIIL. Residues 560 to 563 are Extracellular-facing; sequence EFGS. The helical transmembrane segment at 564–583 threads the bilayer; it reads FLPWKYIILLSLLFIFRTVW. Over 584 to 838 the chain is Cytoplasmic; it reads NTQEVWNLWR…QPHLYIPDED (255 aa). The tract at residues 584 to 838 is interaction with DER1; sequence NTQEVWNLWR…QPHLYIPDED (255 aa). The segment at 795-838 is disordered; that stretch reads ARDREQPAPSAQQQENEDEALIIPDEEEPTATGAQPHLYIPDED. Positions 809–823 are enriched in acidic residues; sequence ENEDEALIIPDEEEP.

Component of the HRD1 ubiquitin ligase complex which contains the E3 ligase HRD1, its cofactors HRD3, USA1 and DER1, substrate recruiting factor YOS9 and CDC48-binding protein UBX2. Within the complex, interacts directly with HRD1 (via N-terminus) and DER1 (via C-terminus) and indirectly with HRD3. In ERAD-L, HRD3 and YOS9 jointly bind misfolded glycoproteins in the endoplasmic reticulum (ER) lumen. Movement of ERAD-L substrates through the ER membrane is facilitated by HRD1 and DER1 which have lateral gates facing each other and which distort the membrane region between the lateral gates, making it much thinner than a normal phospholipid bilayer. Substrates insert into the membrane as a hairpin loop with one strand interacting with DER1 and the other with HRD1. The HRD1 complex interacts with the heterotrimeric CDC48-NPL4-UFD1 ATPase complex which is recruited by UBX2 via its interaction with CDC48 and which moves ubiquitinated substrates to the cytosol for targeting to the proteasome.

Its subcellular location is the endoplasmic reticulum membrane. Functionally, scaffold protein of the endoplasmic reticulum-associated degradation (ERAD) (also known as endoplasmic reticulum quality control, ERQC) pathway involved in ubiquitin-dependent degradation of misfolded endoplasmic reticulum proteins. Component of the HRD1 ubiquitin ligase complex, which is part of the ERAD-L and ERAD-M pathways responsible for the rapid degradation of soluble lumenal and membrane proteins with misfolded lumenal domains (ERAD-L), or ER-membrane proteins with misfolded transmembrane domains (ERAD-M). Has multiple functions in ERAD including recruitment of DER1 to the HRD1 ubiquitin ligase, and regulation of HRD1 activity. Involved in oligomerization of HRD1 and in HRD1 autoubiquitination and degradation. This Saccharomyces cerevisiae (strain ATCC 204508 / S288c) (Baker's yeast) protein is U1 SNP1-associating protein 1 (USA1).